Here is an 810-residue protein sequence, read N- to C-terminus: DNA gyrase subunit A (810 aa).

The Topo IIA-type catalytic domain occupies 36–502 (LPDVRDGLKP…EVLKTSMSDL (467 aa)). Catalysis depends on tyrosine 124, which acts as the O-(5'-phospho-DNA)-tyrosine intermediate. The short motif at 529-535 (QGIGGKG) is the GyrA-box element.

The protein belongs to the type II topoisomerase GyrA/ParC subunit family. Heterotetramer, composed of two GyrA and two GyrB chains. In the heterotetramer, GyrA contains the active site tyrosine that forms a transient covalent intermediate with DNA, while GyrB binds cofactors and catalyzes ATP hydrolysis.

The protein resides in the cytoplasm. It catalyses the reaction ATP-dependent breakage, passage and rejoining of double-stranded DNA.. In terms of biological role, a type II topoisomerase that negatively supercoils closed circular double-stranded (ds) DNA in an ATP-dependent manner to modulate DNA topology and maintain chromosomes in an underwound state. Negative supercoiling favors strand separation, and DNA replication, transcription, recombination and repair, all of which involve strand separation. Also able to catalyze the interconversion of other topological isomers of dsDNA rings, including catenanes and knotted rings. Type II topoisomerases break and join 2 DNA strands simultaneously in an ATP-dependent manner. The chain is DNA gyrase subunit A from Borrelia hermsii (strain HS1 / DAH).